Consider the following 194-residue polypeptide: Thioredoxin O1, mitochondrial (194 aa).

A mitochondrion-targeting transit peptide spans 1–42; the sequence is MKGNWSIVRKVLHRQFSTLRSSTPSSRLSTSIRPLVLAPNSI. Phosphoserine is present on Ser75. Positions 89 to 194 constitute a Thioredoxin domain; it reads VKSEEEFINA…LKNLMEQLYK (106 aa). Catalysis depends on nucleophile residues Cys118 and Cys121. A disulfide bond links Cys118 and Cys121.

It belongs to the thioredoxin family. Plant O-type subfamily.

The protein localises to the mitochondrion matrix. Its function is as follows. Thiol-disulfide oxidoreductase that may participate in various redox reactions. Possesses insulin disulfide bonds reducing activity. Reduced by thioredoxin reductases NTRA and NTRB. The sequence is that of Thioredoxin O1, mitochondrial from Arabidopsis thaliana (Mouse-ear cress).